Consider the following 489-residue polypeptide: N-succinylglutamate 5-semialdehyde dehydrogenase 1 (489 aa).

NAD(+) is bound at residue G223 to G228. Catalysis depends on residues E246 and C280.

It belongs to the aldehyde dehydrogenase family. AstD subfamily.

The catalysed reaction is N-succinyl-L-glutamate 5-semialdehyde + NAD(+) + H2O = N-succinyl-L-glutamate + NADH + 2 H(+). Its pathway is amino-acid degradation; L-arginine degradation via AST pathway; L-glutamate and succinate from L-arginine: step 4/5. Its function is as follows. Catalyzes the NAD-dependent reduction of succinylglutamate semialdehyde into succinylglutamate. This is N-succinylglutamate 5-semialdehyde dehydrogenase 1 from Pseudoalteromonas translucida (strain TAC 125).